The sequence spans 713 residues: Protein tyrosine phosphatase domain-containing protein 1 (713 aa).

The Tyrosine-protein phosphatase domain maps to 80–251 (YSSWITDHLL…LVPLRSVFSC (172 aa)). Cys-188 (phosphocysteine intermediate) is an active-site residue.

It belongs to the protein-tyrosine phosphatase family. Non-receptor class PTPDC1 subfamily.

In terms of biological role, may play roles in cilia formation and/or maintenance. In Danio rerio (Zebrafish), this protein is Protein tyrosine phosphatase domain-containing protein 1 (ptpdc1).